A 438-amino-acid chain; its full sequence is Protein c-ets-1-A (438 aa).

The PNT domain maps to Ala-49–Ser-134. The tract at residues Glu-128–Arg-240 is activation domain; required for transcription activation. The segment at Phe-301–Ala-309 is helix HI-1. Residues Ala-320–Thr-327 are helix HI-2. The segment at residues Ile-332–Val-412 is a DNA-binding region (ETS). The segment at Leu-415 to Leu-419 is helix H4. The tract at residues Pro-423–Met-429 is helix H5.

This sequence belongs to the ETS family. Binds DNA as a homodimer; homodimerization is required for transcription activation.

The protein localises to the nucleus. Its subcellular location is the cytoplasm. With respect to regulation, autoinhibited by a module composed of four alpha helices (HI-1, HI-2, H4, and H5) that flank the DNA-binding ETS domain, reducing the affinity for DNA. Transcription factor. Directly controls the expression of cytokine and chemokine genes in a wide variety of different cellular contexts. This chain is Protein c-ets-1-A (ets1-a), found in Xenopus laevis (African clawed frog).